Consider the following 208-residue polypeptide: Small ribosomal subunit protein uS4 (208 aa).

The disordered stretch occupies residues 29–48; sequence MERRPYGPGQHGRARRKQDS. The S4 RNA-binding domain occupies 95-155; it reads QRLDALVLRA…ERSEKMVPFQ (61 aa).

Belongs to the universal ribosomal protein uS4 family. In terms of assembly, part of the 30S ribosomal subunit. Contacts protein S5. The interaction surface between S4 and S5 is involved in control of translational fidelity.

In terms of biological role, one of the primary rRNA binding proteins, it binds directly to 16S rRNA where it nucleates assembly of the body of the 30S subunit. With S5 and S12 plays an important role in translational accuracy. The sequence is that of Small ribosomal subunit protein uS4 from Micrococcus luteus (strain ATCC 4698 / DSM 20030 / JCM 1464 / CCM 169 / CCUG 5858 / IAM 1056 / NBRC 3333 / NCIMB 9278 / NCTC 2665 / VKM Ac-2230) (Micrococcus lysodeikticus).